Consider the following 568-residue polypeptide: Serine/threonine-protein kinase RIO1 (568 aa).

2 disordered regions span residues 14–70 (GQFD…DDDW) and 83–109 (YVWNGGSNPQANRQTSDSSSAKMSTPA). 2 positions are modified to phosphoserine: S21 and S22. Residues 24–38 (SENRDLKTVKEKDDI) are compositionally biased toward basic and acidic residues. The span at 51–70 (GEGEIEDEEEEGYDDDDDDW) shows a compositional bias: acidic residues. Residues 87 to 105 (GGSNPQANRQTSDSSSAKM) show a composition bias toward polar residues. Residues 180–479 (TEINGCISTG…TGLKKDLSGV (300 aa)) enclose the Protein kinase domain. ATP contacts are provided by K208, S278, and I280. The active-site Proton acceptor is D324. N329 and D341 together coordinate Mg(2+). D341 acts as the 4-aspartylphosphate intermediate in catalysis. Residues 490-568 (VEERTCSDSE…EKTAKTKKGK (79 aa)) form a disordered region. Residues 497-513 (DSEDIGSSECSDTDSEE) show a composition bias toward acidic residues. The span at 514-543 (QGDHARPKKHTTDPDIDKKERKKMVKEAQR) shows a compositional bias: basic and acidic residues. Over residues 544-568 (EKRKNKIPKHVKKRKEKTAKTKKGK) the composition is skewed to basic residues.

The protein belongs to the protein kinase superfamily. RIO-type Ser/Thr kinase family. In terms of assembly, associates with the precursor of the 40S ribosome subunit. Interacts (via its N-terminus) with PRMT5 (via its N-terminus). Interacts with WDR77. Found in a PRMT5 complex composed of PRMT5, WDR77 and RIOK1. Interacts (via its C-terminus) with NCL; this interaction targets NCL for PRTM5 methylation. Mg(2+) is required as a cofactor.

The protein resides in the cytoplasm. The protein localises to the cytosol. The catalysed reaction is L-seryl-[protein] + ATP = O-phospho-L-seryl-[protein] + ADP + H(+). It carries out the reaction L-threonyl-[protein] + ATP = O-phospho-L-threonyl-[protein] + ADP + H(+). It catalyses the reaction ATP + H2O = ADP + phosphate + H(+). In terms of biological role, involved in the final steps of cytoplasmic maturation of the 40S ribosomal subunit. Involved in processing of 18S-E pre-rRNA to the mature 18S rRNA. Required for the recycling of NOB1 and PNO1 from the late 40S precursor. The association with the very late 40S subunit intermediate may involve a translation-like checkpoint point cycle preceeding the binding to the 60S ribosomal subunit. Despite the protein kinase domain is proposed to act predominantly as an ATPase. The catalytic activity regulates its dynamic association with the 40S subunit. In addition to its role in ribosomal biogenesis acts as an adapter protein by recruiting NCL/nucleolin the to PRMT5 complex for its symmetrical methylation. The sequence is that of Serine/threonine-protein kinase RIO1 from Homo sapiens (Human).